Consider the following 520-residue polypeptide: 2-isopropylmalate synthase (520 aa).

The 263-residue stretch at 12–274 folds into the Pyruvate carboxyltransferase domain; it reads VVIFDTTLRD…WCNVESTMLT (263 aa). Aspartate 21, histidine 209, histidine 211, and asparagine 245 together coordinate Mn(2+). The interval 398-520 is regulatory domain; sequence KLTSLTVIAG…RDVPSAAAAS (123 aa).

This sequence belongs to the alpha-IPM synthase/homocitrate synthase family. LeuA type 1 subfamily. In terms of assembly, homodimer. The cofactor is Mn(2+).

It is found in the cytoplasm. It catalyses the reaction 3-methyl-2-oxobutanoate + acetyl-CoA + H2O = (2S)-2-isopropylmalate + CoA + H(+). It functions in the pathway amino-acid biosynthesis; L-leucine biosynthesis; L-leucine from 3-methyl-2-oxobutanoate: step 1/4. Catalyzes the condensation of the acetyl group of acetyl-CoA with 3-methyl-2-oxobutanoate (2-ketoisovalerate) to form 3-carboxy-3-hydroxy-4-methylpentanoate (2-isopropylmalate). This chain is 2-isopropylmalate synthase, found in Nitrobacter hamburgensis (strain DSM 10229 / NCIMB 13809 / X14).